Consider the following 136-residue polypeptide: Small ribosomal subunit protein uS8 (136 aa).

This sequence belongs to the universal ribosomal protein uS8 family. As to quaternary structure, part of the 30S ribosomal subunit. Contacts proteins S5 and S12.

Functionally, one of the primary rRNA binding proteins, it binds directly to 16S rRNA central domain where it helps coordinate assembly of the platform of the 30S subunit. In Sulfurihydrogenibium sp. (strain YO3AOP1), this protein is Small ribosomal subunit protein uS8.